We begin with the raw amino-acid sequence, 557 residues long: MYSDKKNILQLVALLKAHGVRKIVLCPGSRNAAIVHTLANIEDFTCYSVTDERSAGFFAIGLSLQGGGPAAVCCTSGSALLNLHPAVAEAFYQQVPLIVISADRPAAWIGQMDGQTLPQPHVFGTLVKMSVNLPEVHTEEDEWFCNRLINEAILETTHHGKGPVHINVPISEPIYRFTAKTLPEVRVITRYQGLSVYDRDYKELIERLNKYNKRMVVVGQMNLIYLFEKKYVKPLYKHFAWLTEHLGNQTIPGIPIKNFDAAVYSMTPERQEDMAPEILITYGGHIVSKQLKKYLRNHPPREHWHVAADGKIADLYGCLTTVIEMDPFEFLEKIAFLLDNKPTHYPLMWENYCKTIPMPDLAYSEISVIGKLIRALPEPCALHLANSSTVRYAQLFTVPPQVEICCNRGVNGIEGSLSTAIGYAAASSKLNFIIIGDLSFFYDMNALWNQNYGANIRILLLNNEGGEIFHTLPGMDKSSRSREFITAEHYTTAKGWAEERGFIYMKVTGEEELEEAMQPFTSPETRMQPMLLEVFTDKEKDTTLLREYYHGLKNKNE.

The protein belongs to the TPP enzyme family. MenD subfamily. In terms of assembly, homodimer. The cofactor is Mg(2+). Mn(2+) serves as cofactor. Requires thiamine diphosphate as cofactor.

It carries out the reaction isochorismate + 2-oxoglutarate + H(+) = 5-enolpyruvoyl-6-hydroxy-2-succinyl-cyclohex-3-ene-1-carboxylate + CO2. It functions in the pathway quinol/quinone metabolism; 1,4-dihydroxy-2-naphthoate biosynthesis; 1,4-dihydroxy-2-naphthoate from chorismate: step 2/7. Its pathway is quinol/quinone metabolism; menaquinone biosynthesis. Catalyzes the thiamine diphosphate-dependent decarboxylation of 2-oxoglutarate and the subsequent addition of the resulting succinic semialdehyde-thiamine pyrophosphate anion to isochorismate to yield 2-succinyl-5-enolpyruvyl-6-hydroxy-3-cyclohexene-1-carboxylate (SEPHCHC). This Phocaeicola vulgatus (strain ATCC 8482 / DSM 1447 / JCM 5826 / CCUG 4940 / NBRC 14291 / NCTC 11154) (Bacteroides vulgatus) protein is 2-succinyl-5-enolpyruvyl-6-hydroxy-3-cyclohexene-1-carboxylate synthase.